A 483-amino-acid chain; its full sequence is Cobyric acid synthase (483 aa).

The region spanning 252 to 430 (ALQVVAVAYP…LHRLFDSGPF (179 aa)) is the GATase cobBQ-type domain. Cysteine 333 acts as the Nucleophile in catalysis. Residue histidine 422 is part of the active site.

Belongs to the CobB/CobQ family. CobQ subfamily.

The protein operates within cofactor biosynthesis; adenosylcobalamin biosynthesis. Functionally, catalyzes amidations at positions B, D, E, and G on adenosylcobyrinic A,C-diamide. NH(2) groups are provided by glutamine, and one molecule of ATP is hydrogenolyzed for each amidation. The sequence is that of Cobyric acid synthase from Halorhodospira halophila (strain DSM 244 / SL1) (Ectothiorhodospira halophila (strain DSM 244 / SL1)).